Here is a 70-residue protein sequence, read N- to C-terminus: Protein FlmC (70 aa).

In terms of biological role, component of a type I toxin-antitoxin (TA) system. Either this protein or sequences upstream of it are required for translation of downstream flmA; this could be translationally coupled to flmA. This Escherichia coli (strain K12) protein is Protein FlmC (flmC).